The following is a 165-amino-acid chain: C-phycoerythrin class 2 subunit alpha (165 aa).

Residue Cys75 participates in phycourobilin binding. Positions 83 and 140 each coordinate (2R,3E)-phycoerythrobilin.

It belongs to the phycobiliprotein family. In terms of assembly, heterodimer of an alpha and a beta chain. Contains two covalently linked phycoerythrobilin chromophores and one covalently linked phycourobilin chromophore.

The protein localises to the cellular thylakoid membrane. Its function is as follows. Light-harvesting photosynthetic bile pigment-protein from the phycobiliprotein complex. This is C-phycoerythrin class 2 subunit alpha (mpeA) from Synechococcus sp. (strain WH8020).